Here is a 407-residue protein sequence, read N- to C-terminus: Resuscitation-promoting factor RpfA (407 aa).

The first 33 residues, 1-33 (MSGRHRKPTTSNVSVAKIAFTGAVLGGGGIAMA), serve as a signal peptide directing secretion. Disordered stretches follow at residues 142-253 (VNGE…ADLA) and 271-371 (LPAA…AETP). A compositionally biased stretch (pro residues) spans 148–159 (PLAPPPADPAPP). Over residues 160–170 (VELAANDLPAP) the composition is skewed to low complexity. A compositionally biased stretch (pro residues) spans 171–193 (LGEPLPAAPADPAPPADLAPPAP). Tandem repeats lie at residues 178 to 185 (APADPAPP) and 186 to 193 (ADLAPPAP). The interval 178–359 (APADPAPPAD…PDPQPADAPP (182 aa)) is 12 X 8 AA approximate repeats of A-P-A-D-L-A-P-P. Over residues 194–210 (ADVAPPVELAVNDLPAP) the composition is skewed to low complexity. Positions 211-249 (LGEPLPAAPADPAPPADLAPPAPADLAPPAPADLAPPAP) are enriched in pro residues. 10 consecutive repeat copies span residues 218-225 (APADPAPP), 226-233 (ADLAPPAP), 240-247 (APADLAPP), 248-255 (APADLAPP), 274-281 (APAELAPP), 287-294 (ASADLAPP), 295-302 (APADLAPP), 303-310 (APAELAPP), 311-318 (APADLAPP), and 353-359 (QPADAPP). The segment covering 274–292 (APAELAPPADLAPASADLA) has biased composition (low complexity). 2 stretches are compositionally biased toward pro residues: residues 293–312 (PPAP…PPAP) and 350–361 (PDPQPADAPPPG).

Belongs to the transglycosylase family. Rpf subfamily.

In terms of biological role, factor that stimulates resuscitation of dormant cells. Has peptidoglycan (PG) hydrolytic activity. The protein is Resuscitation-promoting factor RpfA (rpfA) of Mycobacterium tuberculosis (strain CDC 1551 / Oshkosh).